Consider the following 435-residue polypeptide: Probable long-chain-alcohol O-fatty-acyltransferase 11 (435 aa).

Helical transmembrane passes span 7–27 (NLIK…YVPT), 36–56 (FLSV…FASV), 59–79 (SGYT…LFSF), 120–140 (PIEV…SVVL), 149–169 (IYPI…LEIL), 200–220 (DFWG…DVYA), 238–258 (LGVF…FFYI), 263–283 (PTGE…AYDA), 300–320 (CLIL…WLFF), 363–383 (FFTG…IGFV), and 406–426 (FFIG…IGFV).

Belongs to the wax synthase family.

It is found in the membrane. It catalyses the reaction a long chain fatty alcohol + a fatty acyl-CoA = a wax ester + CoA. In terms of biological role, catalyzes the final step in the synthesis of long-chain linear esters (waxes). The protein is Probable long-chain-alcohol O-fatty-acyltransferase 11 of Arabidopsis thaliana (Mouse-ear cress).